The primary structure comprises 264 residues: S-adenosylmethionine decarboxylase proenzyme (264 aa).

The active-site Schiff-base intermediate with substrate; via pyruvic acid is Ser113. A Pyruvic acid (Ser); by autocatalysis modification is found at Ser113. His118 (proton acceptor; for processing activity) is an active-site residue. The active-site Proton donor; for catalytic activity is Cys141.

It belongs to the prokaryotic AdoMetDC family. Type 2 subfamily. In terms of assembly, heterooctamer of four alpha and four beta chains arranged as a tetramer of alpha/beta heterodimers. Pyruvate serves as cofactor. Is synthesized initially as an inactive proenzyme. Formation of the active enzyme involves a self-maturation process in which the active site pyruvoyl group is generated from an internal serine residue via an autocatalytic post-translational modification. Two non-identical subunits are generated from the proenzyme in this reaction, and the pyruvate is formed at the N-terminus of the alpha chain, which is derived from the carboxyl end of the proenzyme. The post-translation cleavage follows an unusual pathway, termed non-hydrolytic serinolysis, in which the side chain hydroxyl group of the serine supplies its oxygen atom to form the C-terminus of the beta chain, while the remainder of the serine residue undergoes an oxidative deamination to produce ammonia and the pyruvoyl group blocking the N-terminus of the alpha chain.

The catalysed reaction is S-adenosyl-L-methionine + H(+) = S-adenosyl 3-(methylsulfanyl)propylamine + CO2. It participates in amine and polyamine biosynthesis; S-adenosylmethioninamine biosynthesis; S-adenosylmethioninamine from S-adenosyl-L-methionine: step 1/1. In terms of biological role, catalyzes the decarboxylation of S-adenosylmethionine to S-adenosylmethioninamine (dcAdoMet), the propylamine donor required for the synthesis of the polyamines spermine and spermidine from the diamine putrescine. This is S-adenosylmethionine decarboxylase proenzyme from Pseudomonas paraeruginosa (strain DSM 24068 / PA7) (Pseudomonas aeruginosa (strain PA7)).